The chain runs to 261 residues: Ribosome biogenesis protein C3_06160C_A (261 aa).

Residues 1–38 (MPQNEYIEQHIKKHGRRLDYEERKRKKEAREGHRVAKD) are disordered. 2 short sequence motifs (nuclear localization signal) span residues 11–18 (IKKHGRRL) and 51–58 (AKKRYAEK). Residues 17 to 37 (RLDYEERKRKKEAREGHRVAK) show a composition bias toward basic and acidic residues. Residues 59 to 85 (VAMKKKIKAHQESKVKGPSTPKAEDGE) form a disordered region.

It belongs to the eukaryotic ribosomal protein eS8 family. Ribosome biogenesis protein NSA2 subfamily. As to quaternary structure, component of the pre-66S ribosomal particle. Interacts with NOP7 and RRP1. Interacts with RSA4 (via WD repeats).

It localises to the nucleus. It is found in the nucleolus. Its function is as follows. Involved in the biogenesis of the 60S ribosomal subunit. May play a part in the quality control of pre-60S particles. This Candida albicans (strain SC5314 / ATCC MYA-2876) (Yeast) protein is Ribosome biogenesis protein C3_06160C_A.